We begin with the raw amino-acid sequence, 629 residues long: tRNA uridine 5-carboxymethylaminomethyl modification enzyme MnmG (629 aa).

FAD contacts are provided by residues 13–18, V125, and S180; that span reads GGGHAG. Residue 273-287 participates in NAD(+) binding; it reads GPRYCPSIEDKVMRF. Residue Q370 coordinates FAD.

It belongs to the MnmG family. Homodimer. Heterotetramer of two MnmE and two MnmG subunits. The cofactor is FAD.

The protein localises to the cytoplasm. In terms of biological role, NAD-binding protein involved in the addition of a carboxymethylaminomethyl (cmnm) group at the wobble position (U34) of certain tRNAs, forming tRNA-cmnm(5)s(2)U34. The polypeptide is tRNA uridine 5-carboxymethylaminomethyl modification enzyme MnmG (Serratia proteamaculans (strain 568)).